We begin with the raw amino-acid sequence, 191 residues long: Adenine phosphoribosyltransferase (191 aa).

It belongs to the purine/pyrimidine phosphoribosyltransferase family. In terms of assembly, homodimer.

Its subcellular location is the cytoplasm. It carries out the reaction AMP + diphosphate = 5-phospho-alpha-D-ribose 1-diphosphate + adenine. It functions in the pathway purine metabolism; AMP biosynthesis via salvage pathway; AMP from adenine: step 1/1. Its function is as follows. Catalyzes a salvage reaction resulting in the formation of AMP, that is energically less costly than de novo synthesis. This Nocardia farcinica (strain IFM 10152) protein is Adenine phosphoribosyltransferase.